The primary structure comprises 432 residues: 3-phosphoshikimate 1-carboxyvinyltransferase (432 aa).

3-phosphoshikimate contacts are provided by K23, S24, and R28. A phosphoenolpyruvate-binding site is contributed by K23. Phosphoenolpyruvate-binding residues include G99 and R127. 7 residues coordinate 3-phosphoshikimate: S172, S173, Q174, S200, D317, N341, and K345. Phosphoenolpyruvate is bound at residue Q174. D317 functions as the Proton acceptor in the catalytic mechanism. Positions 349, 391, and 416 each coordinate phosphoenolpyruvate.

The protein belongs to the EPSP synthase family. As to quaternary structure, monomer.

The protein localises to the cytoplasm. It carries out the reaction 3-phosphoshikimate + phosphoenolpyruvate = 5-O-(1-carboxyvinyl)-3-phosphoshikimate + phosphate. The protein operates within metabolic intermediate biosynthesis; chorismate biosynthesis; chorismate from D-erythrose 4-phosphate and phosphoenolpyruvate: step 6/7. Functionally, catalyzes the transfer of the enolpyruvyl moiety of phosphoenolpyruvate (PEP) to the 5-hydroxyl of shikimate-3-phosphate (S3P) to produce enolpyruvyl shikimate-3-phosphate and inorganic phosphate. This Blochmanniella pennsylvanica (strain BPEN) protein is 3-phosphoshikimate 1-carboxyvinyltransferase.